The sequence spans 511 residues: MNVTSFAALRAAAQDIVDEMIADPYGLTSPSVYETARMVVSAPWLEGHRQRVEFLLAQQHEDGTWGGPAAYGLLPTLSAVDALLSVAGTQDARRVAGAVESGLAALAGRFPRNVELPDTIAVELLVPWLIEQVDQRLSRMDDRGDLPGRLDLQADTGTLSGIRELLRQNTGIPEKTWHSLEALGAPAVRSGTVTPMGGAVGASPAATSAWLGDPPHTDAAKACLAYLHQTQARHGGPVSGITSISYFELAWVVTALSGSGLDVDIPAQVPDILRTALGANGLSAGPGLPADSDDTSAALHALDLLGKPESVDCLWEYDTGLYFTCFPKERTPSTSTNAHILVALADRRGQGDTRYDHAAERVGGWLVEQQQPDGRWMDKWHASPYYATACGAAAMARLDGPRTSAALDDAIRWVLDTQHADGSWGRWEGTGEETAYALQVLNHRAAPDRPALEAIRAGRAFLSGHVEDDRRNPPLWHDKDLYTPVRVIRAEILGTLAATQRLAEAEKEARA.

Residues Asp-291 and Asp-293 each contribute to the a divalent metal cation site. A DXDD motif motif is present at residues 291-294 (DSDD).

It belongs to the terpene synthase family. As to quaternary structure, homodimer. It depends on a divalent metal cation as a cofactor.

The enzyme catalyses (2E,6E,10E)-geranylgeranyl diphosphate = ent-copalyl diphosphate. It participates in antibiotic biosynthesis. In terms of biological role, involved in viguiepinol biosynthesis. Catalyzes the conversion of geranylgeranyl diphosphate (GGDP) into copalyl diphosphate (ent-CDP). The polypeptide is Ent-copalyl diphosphate synthase (Streptomyces sp. (strain KO-3988)).